The chain runs to 624 residues: Membrane protein insertase YidC (624 aa).

Residues 8-28 (MIIAIALSLAVLLGWNYFVTA) form a helical membrane-spanning segment. Residues 36 to 95 (QQQAAQVNPSQGVNPSQGVDPSQGVNASPSPKEGGPSAPVPGTLPGAAGGSPQAALARDE) form a disordered region. Polar residues predominate over residues 43-64 (NPSQGVNPSQGVDPSQGVNASP). A run of 5 helical transmembrane segments spans residues 370 to 390 (FDLLIDWGWFYFITKPMFKAL), 396 to 416 (LFGNFGVSILVVTLILKLFFL), 470 to 490 (WPVLIQIPVFFSLYKVLFVTI), 526 to 542 (LLHLGVWPIVMGITMFL), and 559 to 579 (FTFMPIIFTFMLGSFPAGLVI).

The protein belongs to the OXA1/ALB3/YidC family. Type 1 subfamily. As to quaternary structure, interacts with the Sec translocase complex via SecD. Specifically interacts with transmembrane segments of nascent integral membrane proteins during membrane integration.

Its subcellular location is the cell inner membrane. Functionally, required for the insertion and/or proper folding and/or complex formation of integral membrane proteins into the membrane. Involved in integration of membrane proteins that insert both dependently and independently of the Sec translocase complex, as well as at least some lipoproteins. Aids folding of multispanning membrane proteins. This chain is Membrane protein insertase YidC, found in Methylobacterium sp. (strain 4-46).